Consider the following 95-residue polypeptide: Protein TusB (95 aa).

Belongs to the DsrH/TusB family. As to quaternary structure, heterohexamer, formed by a dimer of trimers. The hexameric TusBCD complex contains 2 copies each of TusB, TusC and TusD. The TusBCD complex interacts with TusE.

The protein localises to the cytoplasm. Part of a sulfur-relay system required for 2-thiolation of 5-methylaminomethyl-2-thiouridine (mnm(5)s(2)U) at tRNA wobble positions. This is Protein TusB from Klebsiella pneumoniae subsp. pneumoniae (strain ATCC 700721 / MGH 78578).